A 116-amino-acid polypeptide reads, in one-letter code: Ribonuclease P protein component (116 aa).

It belongs to the RnpA family. Consists of a catalytic RNA component (M1 or rnpB) and a protein subunit.

The catalysed reaction is Endonucleolytic cleavage of RNA, removing 5'-extranucleotides from tRNA precursor.. Its function is as follows. RNaseP catalyzes the removal of the 5'-leader sequence from pre-tRNA to produce the mature 5'-terminus. It can also cleave other RNA substrates such as 4.5S RNA. The protein component plays an auxiliary but essential role in vivo by binding to the 5'-leader sequence and broadening the substrate specificity of the ribozyme. This is Ribonuclease P protein component from Carboxydothermus hydrogenoformans (strain ATCC BAA-161 / DSM 6008 / Z-2901).